The sequence spans 182 residues: MTSFVRGGFVENRKFRINQFIKVPEVRLVDFDGTMIGVIKTADALAKAQAKDLDLVEISPQANPPVCRIINFSKFKYEMEKKEKEARKKQKIFHIKEVRIRPRISDHDLEVKIKHAREFIDGGDKVQLTALFSGREMQHKDLGIKIMERIKESLADIACPERKVYSMGMRVFLTLVPKNKIK.

Belongs to the IF-3 family. Monomer.

It localises to the cytoplasm. Its function is as follows. IF-3 binds to the 30S ribosomal subunit and shifts the equilibrium between 70S ribosomes and their 50S and 30S subunits in favor of the free subunits, thus enhancing the availability of 30S subunits on which protein synthesis initiation begins. This Endomicrobium trichonymphae protein is Translation initiation factor IF-3.